The following is a 772-amino-acid chain: Metal transporter CNNM4 (772 aa).

Over Met1–Gly175 the chain is Extracellular. Asn120 carries an N-linked (GlcNAc...) asparagine glycan. The helical transmembrane segment at Arg176–Ile196 threads the bilayer. Positions Arg176–Glu356 constitute a CNNM transmembrane domain. Topologically, residues Phe197–Gly237 are cytoplasmic. Residues Asn238 to Leu258 constitute an intramembrane region (helical). The Cytoplasmic portion of the chain corresponds to Leu259–Asn261. The chain crosses the membrane as a helical span at residues Leu262–Glu282. Residues Ile283–Ser290 are Extracellular-facing. Residues Arg291–Pro313 form a helical membrane-spanning segment. At Leu314 to Ile772 the chain is on the cytoplasmic side. CBS domains are found at residues Met375–Leu436 and Tyr443–Glu509. The disordered stretch occupies residues Pro647–Ser676. A phosphoserine mark is found at Ser658, Ser662, and Ser767.

This sequence belongs to the ACDP family. In terms of assembly, interacts with COX11. In terms of tissue distribution, present in spinal cord dorsal horn neurons and in developing teeth (at protein level). In the tooth, higher expression is found in the ameloblasts during the transition and maturation phases of amelogenesis; reduced expression in the odontoblasts.

It localises to the cell membrane. In terms of biological role, probable metal transporter. The interaction with the metal ion chaperone COX11 suggests that it may play a role in sensory neuron functions. May play a role in biomineralization and retinal function. The polypeptide is Metal transporter CNNM4 (Cnnm4) (Rattus norvegicus (Rat)).